The sequence spans 469 residues: Interstitial collagenase (469 aa).

Positions 1-19 (MHSFPPLLLLLFWGVVSHS) are cleaved as a signal peptide. Residues 20–99 (FPATLETQEQ…PRCGVPDVAQ (80 aa)) constitute a propeptide, activation peptide. Ser-57 is modified (phosphoserine). A Cysteine switch motif is present at residues 90-97 (PRCGVPDV). Cys-92 contacts Zn(2+). The tract at residues 98–276 (AQFVLTEGNP…VQPIGPQTPK (179 aa)) is metalloprotease. A glycan (N-linked (GlcNAc...) asparagine) is linked at Asn-120. Ca(2+) is bound by residues Asp-124 and Asp-158. Zn(2+) contacts are provided by His-168 and Asp-170. 4 residues coordinate Ca(2+): Asp-175, Gly-176, Gly-178, and Asn-180. Residue His-183 coordinates Zn(2+). Residues Gly-190, Gly-192, and Asp-194 each coordinate Ca(2+). Residue His-196 participates in Zn(2+) binding. 3 residues coordinate Ca(2+): Asp-198, Glu-199, and Glu-201. His-218 serves as a coordination point for Zn(2+). Glu-219 is an active-site residue. Residues His-222 and His-228 each contribute to the Zn(2+) site. Phosphothreonine is present on Thr-274. Hemopexin repeat units follow at residues 275 to 324 (PKAC…WPQL), 325 to 371 (PNGL…FGFP), 374 to 422 (VKHI…FPGI), and 423 to 466 (GHKV…WFNC). Cysteines 278 and 466 form a disulfide. Positions 285 and 329 each coordinate Ca(2+). Phosphotyrosine; by PKDCC is present on Tyr-360. Ca(2+) is bound by residues Asp-378 and Asp-427.

Belongs to the peptidase M10A family. As to quaternary structure, (Microbial infection) Interacts with HIV-1 Tat. It depends on Ca(2+) as a cofactor. Zn(2+) is required as a cofactor. Post-translationally, undergoes autolytic cleavage to two major forms (22 kDa and 27 kDa). A minor form (25 kDa) is the glycosylated form of the 22 kDa form. The 27 kDa form has no activity while the 22/25 kDa form can act as activator for collagenase. In terms of processing, tyrosine phosphorylated in platelets by PKDCC/VLK.

It localises to the secreted. The protein localises to the extracellular space. It is found in the extracellular matrix. The catalysed reaction is Cleavage of the triple helix of collagen at about three-quarters of the length of the molecule from the N-terminus, at 775-Gly-|-Ile-776 in the alpha1(I) chain. Cleaves synthetic substrates and alpha-macroglobulins at bonds where P1' is a hydrophobic residue.. Can be activated without removal of the activation peptide. Its function is as follows. Cleaves collagens of types I, II, and III at one site in the helical domain. Also cleaves collagens of types VII and X. In case of HIV infection, interacts and cleaves the secreted viral Tat protein, leading to a decrease in neuronal Tat's mediated neurotoxicity. The sequence is that of Interstitial collagenase (MMP1) from Homo sapiens (Human).